The sequence spans 216 residues: Invasion protein InvF (216 aa).

An HTH araC/xylS-type domain is found at 112–210 (YWLVGYLLAQ…GVSPRKLSNI (99 aa)). DNA-binding regions (H-T-H motif) lie at residues 129 to 150 (RMLG…SRAL) and 177 to 200 (ITQL…KELI).

Functionally, transcriptional regulator required for the expression of several genes encoding type III secretion system SPI1 effector proteins. The interaction with SicA is necessary for the activation of sigDE (sopB pipC), sicAsipBCDA, and sopE. The protein is Invasion protein InvF (invF) of Salmonella typhi.